We begin with the raw amino-acid sequence, 454 residues long: UDP-N-acetylmuramate--L-alanine ligase (454 aa).

113–119 (GSHGKTT) is an ATP binding site.

The protein belongs to the MurCDEF family.

It localises to the cytoplasm. The catalysed reaction is UDP-N-acetyl-alpha-D-muramate + L-alanine + ATP = UDP-N-acetyl-alpha-D-muramoyl-L-alanine + ADP + phosphate + H(+). It participates in cell wall biogenesis; peptidoglycan biosynthesis. Functionally, cell wall formation. This chain is UDP-N-acetylmuramate--L-alanine ligase, found in Aquifex aeolicus (strain VF5).